The chain runs to 193 residues: Homeobox protein HD-12 (193 aa).

Positions 123–185 (SVIRRINFPK…NARRRILPFM (63 aa)) form a DNA-binding region, homeobox; TALE-type.

It belongs to the TALE/KNOX homeobox family.

Its subcellular location is the nucleus. The protein is Homeobox protein HD-12 (HD-12) of Encephalitozoon cuniculi (strain GB-M1) (Microsporidian parasite).